Here is a 238-residue protein sequence, read N- to C-terminus: tRNA (guanine-N(7)-)-methyltransferase (238 aa).

A compositionally biased stretch (polar residues) spans 1–12; sequence MTDTAENQTPND. The tract at residues 1–20 is disordered; it reads MTDTAENQTPNDRQAGHPRS. S-adenosyl-L-methionine contacts are provided by glutamate 70, aspartate 95, aspartate 122, and aspartate 145. Aspartate 145 is an active-site residue. Residues lysine 149, aspartate 181, and 216 to 219 each bind substrate; that span reads TKFE.

It belongs to the class I-like SAM-binding methyltransferase superfamily. TrmB family.

The enzyme catalyses guanosine(46) in tRNA + S-adenosyl-L-methionine = N(7)-methylguanosine(46) in tRNA + S-adenosyl-L-homocysteine. It functions in the pathway tRNA modification; N(7)-methylguanine-tRNA biosynthesis. Its function is as follows. Catalyzes the formation of N(7)-methylguanine at position 46 (m7G46) in tRNA. The polypeptide is tRNA (guanine-N(7)-)-methyltransferase (Neisseria meningitidis serogroup C (strain 053442)).